A 170-amino-acid chain; its full sequence is Photosystem II extrinsic protein V (170 aa).

An N-terminal signal peptide occupies residues 1–33; it reads MASFFSTLRRSLNRLLIALPVLLGLMISTPAQA. Heme c-binding residues include Cys70, Cys73, His74, and His125.

The protein belongs to the cytochrome c family. PsbV subfamily. In terms of assembly, PSII is composed of 1 copy each of membrane proteins PsbA, PsbB, PsbC, PsbD, PsbE, PsbF, PsbH, PsbI, PsbJ, PsbK, PsbL, PsbM, PsbT, PsbX, PsbY, PsbZ, Psb30/Ycf12, peripheral proteins PsbO, CyanoQ (PsbQ), PsbU, PsbV and a large number of cofactors. It forms dimeric complexes. Heme c serves as cofactor.

It localises to the cellular thylakoid membrane. In terms of biological role, one of the extrinsic, lumenal subunits of photosystem II (PSII). PSII is a light-driven water plastoquinone oxidoreductase, using light energy to abstract electrons from H(2)O, generating a proton gradient subsequently used for ATP formation. The extrinsic proteins stabilize the structure of photosystem II oxygen-evolving complex (OEC), the ion environment of oxygen evolution and protect the OEC against heat-induced inactivation. Low-potential cytochrome c that plays a role in the OEC of PSII. In Synechococcus sp. (strain CC9311), this protein is Photosystem II extrinsic protein V.